Reading from the N-terminus, the 300-residue chain is MAPSQLPPMFNPTPQDIEMLLAAQCHLGSKNLQVHMEPYLWKTRPDGVNVINIGKTWEKILLAARIIAAIDNPADICVISARPYGQRAVLKFASHTGATAIAGRFTPGNFTNYITRSFKEPRLIIVTDPRTDAQAIKEASYVNIPVIALCDTDSPTDFVDVAIPTNNKGRHSIGLVWWLLAREVLRLRGTLASREAEWDVVVDLYFYRDPEAEENKEIAEEAKVPGADEIGAGAVESGFAGENWETQAPGAGVPGTAFAAASAAGATSWEADGADWAASSAAAPAESWAAEAQGAEGAKW.

Residues 269-300 (WEADGADWAASSAAAPAESWAAEAQGAEGAKW) form a disordered region.

It belongs to the universal ribosomal protein uS2 family. Component of the small ribosomal subunit. Mature ribosomes consist of a small (40S) and a large (60S) subunit. The 40S subunit contains about 33 different proteins and 1 molecule of RNA (18S). The 60S subunit contains about 49 different proteins and 3 molecules of RNA (25S, 5.8S and 5S). Interacts with rps21.

The protein localises to the cytoplasm. In terms of biological role, required for the assembly and/or stability of the 40S ribosomal subunit. Required for the processing of the 20S rRNA-precursor to mature 18S rRNA in a late step of the maturation of 40S ribosomal subunits. This Aspergillus terreus (strain NIH 2624 / FGSC A1156) protein is Small ribosomal subunit protein uS2 (rps0).